Consider the following 298-residue polypeptide: S-adenosylmethionine-dependent nucleotide dehydratase (298 aa).

The region spanning 8-235 (ANKELVVNWH…QRFGEIIYAE (228 aa)) is the Radical SAM core domain. Positions 22, 26, and 29 each coordinate [4Fe-4S] cluster.

This sequence belongs to the radical SAM superfamily. Viperin family. Requires [4Fe-4S] cluster as cofactor.

It carries out the reaction CTP + AH2 + S-adenosyl-L-methionine = 3'-deoxy-3',4'-didehydro-CTP + 5'-deoxyadenosine + L-methionine + A + H2O + H(+). The catalysed reaction is UTP + AH2 + S-adenosyl-L-methionine = 3'-deoxy-3',4'-didehydro-UTP + 5'-deoxyadenosine + L-methionine + A + H2O + H(+). Functionally, expression of pVip8 in E.coli (strain MG1655) confers resistance to phages lambda, P1, SECphi8 and T7. Prevents culture collapse upon infection with T7. Catalyzes the conversion of cytidine triphosphate (CTP) to 3'-deoxy-3',4'-didehydro-CTP (ddhCTP) and uridine triphosphate (UTP) to 3'-deoxy-3',4'-didehydro-UTP (ddhUTP), probably via a SAM-dependent radical mechanism. The modified nucleotides repress transcription from T7 RNA polymerase-directed genes (possibly by acting as chain terminators), strongly suggesting these nucleotides block viral polymerase transcription. This chain is S-adenosylmethionine-dependent nucleotide dehydratase, found in Psychrobacter lutiphocae (strain DSM 21542 / CCUG 56590 / IMMIB L-1110).